Here is a 177-residue protein sequence, read N- to C-terminus: GTP-dependent dephospho-CoA kinase (177 aa).

Residues Asp48, Val49, Val50, Asp67, Lys69, and Glu124 each contribute to the GTP site.

This sequence belongs to the GTP-dependent DPCK family.

The catalysed reaction is 3'-dephospho-CoA + GTP = GDP + CoA + H(+). The protein operates within cofactor biosynthesis; coenzyme A biosynthesis. In terms of biological role, catalyzes the GTP-dependent phosphorylation of the 3'-hydroxyl group of dephosphocoenzyme A to form coenzyme A (CoA). The protein is GTP-dependent dephospho-CoA kinase of Pyrococcus furiosus (strain ATCC 43587 / DSM 3638 / JCM 8422 / Vc1).